A 148-amino-acid polypeptide reads, in one-letter code: Ubiquitin-conjugating enzyme E2 13 (148 aa).

The UBC core domain maps to 2-148; it reads ALPKRIIKEI…AREWTKKYAV (147 aa). Cys86 acts as the Glycyl thioester intermediate in catalysis.

This sequence belongs to the ubiquitin-conjugating enzyme family. Heterodimer with spm2.

It carries out the reaction S-ubiquitinyl-[E1 ubiquitin-activating enzyme]-L-cysteine + [E2 ubiquitin-conjugating enzyme]-L-cysteine = [E1 ubiquitin-activating enzyme]-L-cysteine + S-ubiquitinyl-[E2 ubiquitin-conjugating enzyme]-L-cysteine.. Its pathway is protein modification; protein ubiquitination. In terms of biological role, has a role in the DNA error-free postreplication repair (PRR) pathway. The ubc13/spm2 heterodimer catalyzes the synthesis of non-canonical poly-ubiquitin chains that are linked through 'Lys-63'. The sequence is that of Ubiquitin-conjugating enzyme E2 13 (ubc13) from Schizosaccharomyces pombe (strain 972 / ATCC 24843) (Fission yeast).